Reading from the N-terminus, the 229-residue chain is MKSSDIDQDLFTDSYCKVCSAQLISESQRVAHYESRKHASKVRLYYMLHPRDGGCPAKRLRAENGSDADMVDKNKCCTLCNMSFTSAVVADSHYQGKIHAKRLKLLLGEKPPLKTTAAPLSSLKAPRVDTAPVVASPYQRRDSDRYCGLCAAWFNNPLMAQQHYEGKKHKKNAARVALLEQLGTSLDLGELRGLRRTYRCTTCSVSLNSIEQYHAHLQGSKHQTNLKNK.

4 consecutive Matrin-type zinc fingers follow at residues 14 to 44, 72 to 106, 145 to 175, and 198 to 228; these read SYCK…KVRL, DKNK…LKLL, RYCG…NAAR, and YRCT…NLKN.

It localises to the nucleus. The polypeptide is Zinc finger matrin-type protein 4 (Zmat4) (Mus musculus (Mouse)).